A 117-amino-acid chain; its full sequence is Prefoldin subunit beta (117 aa).

The protein belongs to the prefoldin subunit beta family. Heterohexamer of two alpha and four beta subunits.

The protein localises to the cytoplasm. In terms of biological role, molecular chaperone capable of stabilizing a range of proteins. Seems to fulfill an ATP-independent, HSP70-like function in archaeal de novo protein folding. This is Prefoldin subunit beta (pfdB) from Methanosarcina acetivorans (strain ATCC 35395 / DSM 2834 / JCM 12185 / C2A).